The primary structure comprises 35 residues: Kappa-theraphotoxin-Tb1a (35 aa).

3 cysteine pairs are disulfide-bonded: cysteine 3–cysteine 18, cysteine 10–cysteine 23, and cysteine 17–cysteine 30.

The protein belongs to the neurotoxin 10 (Hwtx-1) family. 59 (Tltx) subfamily. As to quaternary structure, monomer. As to expression, expressed by the venom gland.

It is found in the secreted. Functionally, blocks Kv4.2/KCND2 voltage-gated potassium channels (IC(50) is 193.0 nM) by shifting the voltage-dependence of channel activation to more depolarized potentials. The toxin is thought to bind to the S3-S4 linker region of the voltage sensor domain. This chain is Kappa-theraphotoxin-Tb1a, found in Theraphosa blondi (Goliath birdeating spider).